Here is a 64-residue protein sequence, read N- to C-terminus: Conotoxin Pu5.2 (64 aa).

An N-terminal signal peptide occupies residues 1 to 22 (MRCVPVFVILLLLIASTPSVDA). Positions 23-52 (RPNPKDDVPLASFHGADNANRILRTLWNLR) are excised as a propeptide. Position 63 is an isoleucine amide (Ile-63).

The protein belongs to the conotoxin T superfamily. In terms of processing, contains 2 disulfide bonds that can be either 'C1-C3, C2-C4' or 'C1-C4, C2-C3', since these disulfide connectivities have been observed for conotoxins with cysteine framework V (for examples, see AC P0DQQ7 and AC P81755). As to expression, expressed by the venom duct.

It localises to the secreted. The protein is Conotoxin Pu5.2 of Conus pulicarius (Flea-bitten cone).